A 120-amino-acid chain; its full sequence is Purkinje cell protein 2 (120 aa).

GoLoco domains are found at residues 7-29 (QEGFFNLLTHVQGDRMEEQRCSL) and 47-69 (MDNLMDMLVNTQGRRMDDQRVTV). The interval 16-120 (HVQGDRMEEQ…SSPQPQTQAP (105 aa)) is disordered. Over residues 108–120 (RRNSSPQPQTQAP) the composition is skewed to polar residues. The residue at position 111 (S111) is a Phosphoserine.

As to expression, cerebellum (Purkinje cells) and retinal bipolar neurons.

Its function is as follows. May function as a cell-type specific modulator for G protein-mediated cell signaling. The chain is Purkinje cell protein 2 (Pcp2) from Mus musculus (Mouse).